Consider the following 143-residue polypeptide: Nucleoside diphosphate kinase 2 (143 aa).

Residues Lys11, Phe59, Arg87, Thr93, Arg104, and Asn114 each contribute to the ATP site. His117 (pros-phosphohistidine intermediate) is an active-site residue.

This sequence belongs to the NDK family. As to quaternary structure, homotetramer. Mg(2+) serves as cofactor.

It is found in the cytoplasm. The enzyme catalyses a 2'-deoxyribonucleoside 5'-diphosphate + ATP = a 2'-deoxyribonucleoside 5'-triphosphate + ADP. It carries out the reaction a ribonucleoside 5'-diphosphate + ATP = a ribonucleoside 5'-triphosphate + ADP. Its function is as follows. Major role in the synthesis of nucleoside triphosphates other than ATP. The ATP gamma phosphate is transferred to the NDP beta phosphate via a ping-pong mechanism, using a phosphorylated active-site intermediate. The chain is Nucleoside diphosphate kinase 2 from Protochlamydia amoebophila (strain UWE25).